Consider the following 468-residue polypeptide: Zinc-regulated transporter 1 (468 aa).

The N-terminal stretch at 1-17 (MKFTHLFFIGLLTKVYT) is a signal peptide. Residues 18–185 (ETVTVLSTRS…VKRDYDIPLR (168 aa)) lie on the Extracellular side of the membrane. Asn-57 and Asn-67 each carry an N-linked (GlcNAc...) asparagine glycan. Residues 186–206 (IGLLFVILVTSGIGSFGPIVL) traverse the membrane as a helical segment. Residues 207–217 (KQFVNLSQENY) lie on the Cytoplasmic side of the membrane. A helical membrane pass occupies residues 218 to 238 (IIVIIKQFGTGIIISTAFVHL). The Extracellular portion of the chain corresponds to 239–257 (MTHAQLMWSNSCLKIKYEG). The helical transmembrane segment at 258–278 (TGASITMAGIFIAFIIEYIAL) threads the bilayer. Residues 279–314 (RIVNARDTGKVDKKEIEETSSNEQSLHGISVNDKIS) lie on the Cytoplasmic side of the membrane. Residues 315–335 (VMILEAGIIFHSILIGITLVV) form a helical membrane-spanning segment. Over 336-338 (TDD) the chain is Extracellular. The chain crosses the membrane as a helical span at residues 339 to 359 (VYFITLFIVIVFHQFFEGLAL). Topologically, residues 360–374 (SSRIISITNASLSTK) are cytoplasmic. A helical membrane pass occupies residues 375–395 (LVMALMFALITPIGMAIGIGV). The Extracellular portion of the chain corresponds to 396–406 (LNKFNGNDPST). Residues 407–427 (LIALGTLDSFSAGVLLWTGLI) form a helical membrane-spanning segment. Over 428-447 (EMWSHDWLHGHLRNSSFVKT) the chain is Cytoplasmic. Residues 448-468 (TVALVSLILGMLLMSLLGNWA) form a helical membrane-spanning segment.

It belongs to the ZIP transporter (TC 2.A.5) family.

The protein localises to the cell membrane. The enzyme catalyses Zn(2+)(in) = Zn(2+)(out). Its function is as follows. Zinc transporter that acts with PRA1 in sequestration of zinc from host tissues during infection. The pH-regulated antigen 1 (PRA1) binds zinc from its environment and then reassociates with ZRT1 to acquire this essential metal. The protein is Zinc-regulated transporter 1 (ZRT101) of Candida albicans (strain SC5314 / ATCC MYA-2876) (Yeast).